The sequence spans 233 residues: Esterase FUS5 (233 aa).

Catalysis depends on charge relay system residues serine 105, aspartate 159, and histidine 187.

It belongs to the LovG family.

Esterase; part of the gene cluster that mediates the biosynthesis of the mycotoxin fusarin C. Within the cluster, FUS1, FUS2, FUS8 and FUS9 are sufficient for fusarin production. The other FUS cluster members are not essential for fusarin C biosynthesis. This chain is Esterase FUS5, found in Gibberella fujikuroi (strain CBS 195.34 / IMI 58289 / NRRL A-6831) (Bakanae and foot rot disease fungus).